The sequence spans 114 residues: MPRSVNHVASRAKRKRILKLTRGYYGARKNVWTVAKNTWEKGLTYAFRDRRNKKRNFRALWIQRINAAARMEGLSYSRLMGALHAAGIEINRKVLADLAVNHPEAFKAIVAKVK.

It belongs to the bacterial ribosomal protein bL20 family.

Functionally, binds directly to 23S ribosomal RNA and is necessary for the in vitro assembly process of the 50S ribosomal subunit. It is not involved in the protein synthesizing functions of that subunit. The polypeptide is Large ribosomal subunit protein bL20 (Parabacteroides distasonis (strain ATCC 8503 / DSM 20701 / CIP 104284 / JCM 5825 / NCTC 11152)).